The primary structure comprises 827 residues: Glycerol-3-phosphate acyltransferase (827 aa).

The short motif at 325–330 is the HXXXXD motif element; that stretch reads CHRSHM.

It belongs to the GPAT/DAPAT family.

The protein localises to the cell inner membrane. The enzyme catalyses sn-glycerol 3-phosphate + an acyl-CoA = a 1-acyl-sn-glycero-3-phosphate + CoA. Its pathway is phospholipid metabolism; CDP-diacylglycerol biosynthesis; CDP-diacylglycerol from sn-glycerol 3-phosphate: step 1/3. This chain is Glycerol-3-phosphate acyltransferase, found in Shigella boydii serotype 4 (strain Sb227).